The following is a 578-amino-acid chain: Isocitrate dehydrogenase kinase/phosphatase (578 aa).

Residues 315-321 (APGIRGM) and K336 each bind ATP. Residue D371 is part of the active site.

The protein belongs to the AceK family.

The protein resides in the cytoplasm. It carries out the reaction L-seryl-[isocitrate dehydrogenase] + ATP = O-phospho-L-seryl-[isocitrate dehydrogenase] + ADP + H(+). Bifunctional enzyme which can phosphorylate or dephosphorylate isocitrate dehydrogenase (IDH) on a specific serine residue. This is a regulatory mechanism which enables bacteria to bypass the Krebs cycle via the glyoxylate shunt in response to the source of carbon. When bacteria are grown on glucose, IDH is fully active and unphosphorylated, but when grown on acetate or ethanol, the activity of IDH declines drastically concomitant with its phosphorylation. The polypeptide is Isocitrate dehydrogenase kinase/phosphatase (Escherichia coli O157:H7).